A 281-amino-acid chain; its full sequence is Cis-2,3-dihydrobiphenyl-2,3-diol dehydrogenase (281 aa).

Position 10-34 (10-34 (ITGGASGLGRALVDRFVAEGARVAV)) interacts with NAD(+). Ser-142 contributes to the substrate binding site. Residue Tyr-155 is the Proton acceptor of the active site.

This sequence belongs to the short-chain dehydrogenases/reductases (SDR) family. Homotetramer.

The catalysed reaction is (2R,3S)-3-phenylcyclohexa-3,5-diene-1,2-diol + NAD(+) = biphenyl-2,3-diol + NADH + H(+). Its pathway is xenobiotic degradation; biphenyl degradation; 2-hydroxy-2,4-pentadienoate and benzoate from biphenyl: step 2/4. The protein is Cis-2,3-dihydrobiphenyl-2,3-diol dehydrogenase (bphB) of Comamonas testosteroni (Pseudomonas testosteroni).